We begin with the raw amino-acid sequence, 83 residues long: Translational regulator CsrA (83 aa).

Belongs to the CsrA/RsmA family. In terms of assembly, homodimer; the beta-strands of each monomer intercalate to form a hydrophobic core, while the alpha-helices form wings that extend away from the core.

It localises to the cytoplasm. Functionally, a translational regulator that binds mRNA to regulate translation initiation and/or mRNA stability. Usually binds in the 5'-UTR at or near the Shine-Dalgarno sequence preventing ribosome-binding, thus repressing translation. Its main target seems to be the major flagellin gene, while its function is anatagonized by FliW. The sequence is that of Translational regulator CsrA from Thermotoga maritima (strain ATCC 43589 / DSM 3109 / JCM 10099 / NBRC 100826 / MSB8).